A 205-amino-acid polypeptide reads, in one-letter code: Probable 3'-5' exonuclease KapD (205 aa).

The 168-residue stretch at 6 to 173 folds into the Exonuclease domain; sequence LLIIDFEFTM…DDALTAYKLF (168 aa). Residues Asp-10, Glu-12, and Asp-104 each coordinate Mg(2+). The active-site Proton acceptor is Glu-12. Glu-12 lines the AMP pocket. The active-site Proton acceptor is the His-160. Residue His-160 participates in AMP binding. Asp-165 provides a ligand contact to Mg(2+).

Mg(2+) serves as cofactor.

Functionally, specifically inhibits the KinA pathway to sporulation. This is Probable 3'-5' exonuclease KapD (kapD) from Bacillus subtilis (strain 168).